The sequence spans 341 residues: KH domain-containing RNA-binding protein QKI (341 aa).

Residues 11 to 82 (PKPTPDYLMQ…PDAVGPIVQL (72 aa)) form a qua1 domain; involved in homodimerization region. Positions 87-153 (YVPVKEYPDF…WEHLNEDLHV (67 aa)) constitute a KH domain. Residues 182-213 (AAEGEDSLKKMQLMELAILNGTYRDANIKSPA) are qua2 domain; involved in RNA binding. A Phosphoserine modification is found at S188. Position 227 is an omega-N-methylarginine (R227). An Asymmetric dimethylarginine; by CARM1; alternate modification is found at R242. Omega-N-methylarginine; alternate is present on R242. Position 256 is an omega-N-methylarginine (R256). The short motif at 276–279 (PPGP) is the SH3-binding element. Positions 324–330 (RVHPYQR) match the Nuclear localization signal motif.

It belongs to the quaking family. As to quaternary structure, homodimer; does not require RNA to homodimerize. Able to heterodimerize with BICC1. Post-translationally, methylated by PRMT1. In terms of processing, tyrosine phosphorylated at its C-terminus, probably by FYN. Phosphorylation leads to decreased mRNA-binding affinity, affecting transport and/or stabilization of MBP mRNA. Ubiquitinated by RNF6 in macrophages, leading to its degradation.

The protein localises to the nucleus. It is found in the cytoplasm. Its function is as follows. RNA reader protein, which recognizes and binds specific RNAs, thereby regulating RNA metabolic processes, such as pre-mRNA splicing, circular RNA (circRNA) formation, mRNA export, mRNA stability and/or translation. Involved in various cellular processes, such as mRNA storage into stress granules, apoptosis, lipid deposition, interferon response, glial cell fate and development. Binds to the 5'-NACUAAY-N(1,20)-UAAY-3' RNA core sequence. Acts as a mRNA modification reader that specifically recognizes and binds mRNA transcripts modified by internal N(7)-methylguanine (m7G). Promotes the formation of circular RNAs (circRNAs) during the epithelial to mesenchymal transition and in cardiomyocytes: acts by binding to sites flanking circRNA-forming exons. CircRNAs are produced by back-splicing circularization of pre-mRNAs. Plays a central role in myelinization via 3 distinct mechanisms. First, acts by protecting and promoting stability of target mRNAs such as MBP, SIRT2 and CDKN1B, which promotes oligodendrocyte differentiation. Second, participates in mRNA transport by regulating the nuclear export of MBP mRNA. Finally, indirectly regulates mRNA splicing of MAG pre-mRNA during oligodendrocyte differentiation by acting as a negative regulator of MAG exon 12 alternative splicing: acts by binding to HNRNPA1 mRNA splicing factor, preventing its translation. Involved in microglia differentiation and remyelination by regulating microexon alternative splicing of the Rho GTPase pathway. Involved in macrophage differentiation: promotes monocyte differentiation by regulating pre-mRNA splicing in naive peripheral blood monocytes. Acts as an important regulator of muscle development: required for the contractile function of cardiomyocytes by regulating alternative splicing of cardiomyocyte transcripts. Acts as a negative regulator of thermogenesis by decreasing stability, nuclear export and translation of mRNAs encoding PPARGC1A and UCP1. Also required for visceral endoderm function and blood vessel development. May also play a role in smooth muscle development. In addition to its RNA-binding activity, also acts as a nuclear transcription coactivator for SREBF2/SREBP2. This chain is KH domain-containing RNA-binding protein QKI, found in Bos taurus (Bovine).